The primary structure comprises 347 residues: 4-hydroxy-2-oxovalerate aldolase 2 (347 aa).

One can recognise a Pyruvate carboxyltransferase domain in the interval 7-259 (VRITDTSLRD…KTGIDFFDIA (253 aa)). 15 to 16 (RD) is a binding site for substrate. Mn(2+) is bound at residue aspartate 16. The active-site Proton acceptor is histidine 19. 2 residues coordinate substrate: serine 169 and histidine 198. Mn(2+)-binding residues include histidine 198 and histidine 200. Tyrosine 289 lines the substrate pocket.

It belongs to the 4-hydroxy-2-oxovalerate aldolase family.

The catalysed reaction is (S)-4-hydroxy-2-oxopentanoate = acetaldehyde + pyruvate. This Mycobacterium ulcerans (strain Agy99) protein is 4-hydroxy-2-oxovalerate aldolase 2.